The sequence spans 155 residues: Myelin basic protein (155 aa).

Disordered regions lie at residues 1–70 and 109–155; these read MASA…GRQT and TDGQ…PARR. A2 carries the post-translational modification N-acetylalanine. 2 stretches are compositionally biased toward basic and acidic residues: residues 37-49 and 123-134; these read GSRKVPEKGKEPA and KSKEAYRGRRDG.

The protein belongs to the myelin basic protein family.

The protein resides in the myelin membrane. Its function is as follows. This protein may function to maintain proper structure of myelin. The sequence is that of Myelin basic protein (MBP) from Heterodontus francisci (Horn shark).